The sequence spans 517 residues: Probable anion transporter 6, chloroplastic (517 aa).

The segment at 51-73 (TERVRESKKLPPKDPIEDPKPQL) is disordered. Residues 52 to 70 (ERVRESKKLPPKDPIEDPK) are compositionally biased toward basic and acidic residues. Helical transmembrane passes span 130–150 (FGWS…GYAL), 170–190 (IGVF…GFMP), 229–249 (FVFG…PPII), 255–275 (ESVF…FQFL), 312–332 (SFFQ…GSWG), 352–372 (LTEA…VTSL), 397–417 (IAFV…GLPP), 420–440 (IVGI…GLYC), 452–472 (ILLG…VALT), and 484–504 (MSLF…WLAF).

This sequence belongs to the major facilitator superfamily. Sodium/anion cotransporter (TC 2.A.1.14) family. In terms of tissue distribution, expressed in leaf veins and sepals.

The protein resides in the plastid. It is found in the chloroplast membrane. In terms of biological role, inorganic phosphate and probable anion transporter. The protein is Probable anion transporter 6, chloroplastic (ANTR6) of Arabidopsis thaliana (Mouse-ear cress).